Consider the following 617-residue polypeptide: Probable endochitinase (617 aa).

Residues 53–426 form the GH18 domain; sequence YIRPCYFTNW…SVIAKELGGV (374 aa). Residues Cys57 and Cys82 are joined by a disulfide bond. Chitin-binding positions include 109 to 110 and 136 to 139; these read DW and GGWS. The active-site Proton donor is the Glu179. Chitin is bound by residues Tyr180 and 245–248; that span reads MSYD. The N-linked (GlcNAc...) asparagine glycan is linked to Asn310. Trp394 contacts chitin. Chitin-binding type-2 domains follow at residues 478 to 534 and 563 to 617; these read TNVC…GCSV and AFKC…KCAK. Cystine bridges form between Cys511–Cys524 and Cys594–Cys607.

This sequence belongs to the glycosyl hydrolase 18 family. Chitinase class II subfamily.

It carries out the reaction Random endo-hydrolysis of N-acetyl-beta-D-glucosaminide (1-&gt;4)-beta-linkages in chitin and chitodextrins.. This Caenorhabditis elegans protein is Probable endochitinase (cht-1).